The following is a 247-amino-acid chain: PABIR family member 2 (247 aa).

A disordered region spans residues 1–23 (MAQEKMELDLEPDTSYGGTLRRS). Ala-2 bears the N-acetylalanine mark. Phosphoserine occurs at positions 25, 33, 50, 58, and 63. The segment at 82–104 (ISQSWDESLSLSDSDFDKPEKLY) is disordered. Residues 83–94 (SQSWDESLSLSD) show a composition bias toward low complexity. Residue Thr-112 is modified to Phosphothreonine. Phosphoserine occurs at positions 115 and 119. An Omega-N-methylarginine modification is found at Arg-122. Disordered regions lie at residues 129–152 (VSSS…SQSP), 158–177 (PSVL…SQPK), and 202–230 (DILD…SPVA). A phosphoserine mark is found at Ser-137 and Ser-141. The segment covering 166–176 (RKGEMETESQP) has biased composition (basic and acidic residues). The span at 202–216 (DILDGSSSSSGLSSD) shows a compositional bias: low complexity.

This sequence belongs to the FAM122 family. Isoform 3 and isoform 4 are phosphorylated on Ser-62 and Ser-64.

The chain is PABIR family member 2 from Homo sapiens (Human).